The chain runs to 126 residues: MPDPAKSAPAPKKGSKKAVTKAQKKDGKKRKRSRKESYSVYVYKVLKQVHPDTGISSKAMGIMNSFVNDIFERIAGEASRLAHYNKRSTITSREIQTAVRLLLPGELAKHAVSEGTKAVTKYTSSK.

A compositionally biased stretch (low complexity) spans 1 to 12 (MPDPAKSAPAPK). Residues 1-36 (MPDPAKSAPAPKKGSKKAVTKAQKKDGKKRKRSRKE) are disordered. P2 bears the N-acetylproline mark. K6 is subject to N6-(2-hydroxyisobutyryl)lysine; alternate. Residue K6 is modified to N6-(beta-hydroxybutyryl)lysine; alternate. Position 6 is an N6-acetyllysine; alternate (K6). K6 carries the post-translational modification N6-butyryllysine; alternate. Position 6 is an N6-crotonyllysine; alternate (K6). The residue at position 6 (K6) is an N6-lactoyllysine; alternate. K6 participates in a covalent cross-link: Glycyl lysine isopeptide (Lys-Gly) (interchain with G-Cter in SUMO2); alternate. At S7 the chain carries ADP-ribosylserine. N6-(beta-hydroxybutyryl)lysine; alternate is present on K12. An N6-acetyllysine; alternate mark is found at K12 and K13. 2 positions are modified to N6-crotonyllysine; alternate: K12 and K13. An N6-lactoyllysine; alternate modification is found at K12. The residue at position 13 (K13) is an N6-(2-hydroxyisobutyryl)lysine; alternate. The residue at position 15 (S15) is a Phosphoserine; by STK4/MST1. K16, K17, K21, and K24 each carry N6-acetyllysine; alternate. N6-crotonyllysine; alternate is present on residues K16, K17, K21, and K24. N6-lactoyllysine; alternate occurs at positions 16, 17, 21, and 24. An N6-(beta-hydroxybutyryl)lysine; alternate mark is found at K17 and K21. Position 17 is an N6-glutaryllysine; alternate (K17). N6-(2-hydroxyisobutyryl)lysine; alternate is present on residues K21 and K24. An N6-butyryllysine; alternate modification is found at K21. K21 participates in a covalent cross-link: Glycyl lysine isopeptide (Lys-Gly) (interchain with G-Cter in SUMO2); alternate. Position 25 is an N6-(2-hydroxyisobutyryl)lysine (K25). The residue at position 35 (K35) is an N6-(2-hydroxyisobutyryl)lysine; alternate. The residue at position 35 (K35) is an N6-(beta-hydroxybutyryl)lysine; alternate. K35 carries the N6-crotonyllysine; alternate modification. N6-glutaryllysine; alternate is present on K35. K35 carries the post-translational modification N6-succinyllysine; alternate. A Glycyl lysine isopeptide (Lys-Gly) (interchain with G-Cter in ubiquitin); alternate cross-link involves residue K35. Position 36 is a polyADP-ribosyl glutamic acid (E36). S37 carries the phosphoserine; by AMPK modification. An N6-(2-hydroxyisobutyryl)lysine; alternate mark is found at K44, K47, and K58. K44 carries the N6-lactoyllysine; alternate modification. N6-glutaryllysine; alternate occurs at positions 44 and 47. An N6-methyllysine; alternate modification is found at K47. An N6,N6-dimethyllysine; alternate modification is found at K58. Residue R80 is modified to Dimethylated arginine. Residue K86 is modified to N6-(2-hydroxyisobutyryl)lysine; alternate. Residue K86 is modified to N6-(beta-hydroxybutyryl)lysine; alternate. Position 86 is an N6-acetyllysine; alternate (K86). K86 is modified (N6-lactoyllysine; alternate). K86 bears the N6,N6,N6-trimethyllysine; alternate mark. Omega-N-methylarginine occurs at positions 87 and 93. Residue K109 is modified to N6-(2-hydroxyisobutyryl)lysine; alternate. K109 bears the N6-lactoyllysine; alternate mark. An N6-glutaryllysine; alternate modification is found at K109. N6-methyllysine; alternate is present on K109. Residue S113 is glycosylated (O-linked (GlcNAc) serine). T116 bears the Phosphothreonine mark. K117 and K121 each carry N6-(2-hydroxyisobutyryl)lysine; alternate. 2 positions are modified to N6-(beta-hydroxybutyryl)lysine; alternate: K117 and K121. N6-lactoyllysine; alternate occurs at positions 117 and 121. N6-glutaryllysine; alternate is present on residues K117 and K121. N6-succinyllysine; alternate is present on residues K117 and K121. K117 carries the N6-malonyllysine; alternate modification. At K117 the chain carries N6-methylated lysine; alternate. K121 is covalently cross-linked (Glycyl lysine isopeptide (Lys-Gly) (interchain with G-Cter in ubiquitin); alternate).

It belongs to the histone H2B family. In terms of assembly, the nucleosome is a histone octamer containing two molecules each of H2A, H2B, H3 and H4 assembled in one H3-H4 heterotetramer and two H2A-H2B heterodimers. The octamer wraps approximately 147 bp of DNA. Found in a complex with PPAR9; DTX3L AND STAT1; the interaction is likely to induce DTX3L-mediated ubiquitination of H2BC9/H2BJ. Monoubiquitination at Lys-35 (H2BK34Ub) by the MSL1/MSL2 dimer is required for histone H3 'Lys-4' (H3K4me) and 'Lys-79' (H3K79me) methylation and transcription activation at specific gene loci, such as HOXA9 and MEIS1 loci. Similarly, monoubiquitination at Lys-121 (H2BK120Ub) by the RNF20/40 complex gives a specific tag for epigenetic transcriptional activation and is also prerequisite for histone H3 'Lys-4' and 'Lys-79' methylation. It also functions cooperatively with the FACT dimer to stimulate elongation by RNA polymerase II. H2BK120Ub also acts as a regulator of mRNA splicing: deubiquitination by USP49 is required for efficient cotranscriptional splicing of a large set of exons. Monoubiquitinated by DTX3L upon encephalomyocarditis virus (EMCV)-mediated infection. Post-translationally, phosphorylation at Ser-37 (H2BS36ph) by AMPK in response to stress promotes transcription. Phosphorylated on Ser-15 (H2BS14ph) by STK4/MST1 during apoptosis; which facilitates apoptotic chromatin condensation. Also phosphorylated on Ser-15 in response to DNA double strand breaks (DSBs), and in correlation with somatic hypermutation and immunoglobulin class-switch recombination. In terms of processing, glcNAcylation at Ser-113 promotes monoubiquitination of Lys-121. It fluctuates in response to extracellular glucose, and associates with transcribed genes. ADP-ribosylated by PARP1 or PARP2 on Ser-7 (H2BS6ADPr) in response to DNA damage. H2BS6ADPr promotes recruitment of CHD1L. Poly ADP-ribosylation on Glu-36 (H2BE35ADPr) by PARP1 regulates adipogenesis: it inhibits phosphorylation at Ser-37 (H2BS36ph), thereby blocking expression of pro-adipogenetic genes. Post-translationally, crotonylation (Kcr) is specifically present in male germ cells and marks testis-specific genes in post-meiotic cells, including X-linked genes that escape sex chromosome inactivation in haploid cells. Crotonylation marks active promoters and enhancers and confers resistance to transcriptional repressors. It is also associated with post-meiotically activated genes on autosomes. In terms of processing, lactylated in macrophages by EP300/P300 by using lactoyl-CoA directly derived from endogenous or exogenous lactate, leading to stimulates gene transcription.

It localises to the nucleus. The protein resides in the chromosome. In terms of biological role, core component of nucleosome. Nucleosomes wrap and compact DNA into chromatin, limiting DNA accessibility to the cellular machineries which require DNA as a template. Histones thereby play a central role in transcription regulation, DNA repair, DNA replication and chromosomal stability. DNA accessibility is regulated via a complex set of post-translational modifications of histones, also called histone code, and nucleosome remodeling. The chain is Histone H2B type 1-H from Homo sapiens (Human).